We begin with the raw amino-acid sequence, 123 residues long: Ribonuclease P protein component 2 (123 aa).

The protein belongs to the eukaryotic/archaeal RNase P protein component 2 family. In terms of assembly, consists of a catalytic RNA component and at least 4-5 protein subunits.

It is found in the cytoplasm. The enzyme catalyses Endonucleolytic cleavage of RNA, removing 5'-extranucleotides from tRNA precursor.. Functionally, part of ribonuclease P, a protein complex that generates mature tRNA molecules by cleaving their 5'-ends. This chain is Ribonuclease P protein component 2, found in Sulfurisphaera tokodaii (strain DSM 16993 / JCM 10545 / NBRC 100140 / 7) (Sulfolobus tokodaii).